We begin with the raw amino-acid sequence, 343 residues long: Oxygen-dependent coproporphyrinogen-III oxidase (343 aa).

Substrate is bound at residue S99. The a divalent metal cation site is built by H103 and H113. H113 functions as the Proton donor in the catalytic mechanism. 115–117 is a binding site for substrate; it reads NYR. Positions 147 and 177 each coordinate a divalent metal cation. An important for dimerization region spans residues 267–302; that stretch reads YVEFNLVWDRGTIFGLQTNGRTESILMSLPPLARWE.

Belongs to the aerobic coproporphyrinogen-III oxidase family. As to quaternary structure, homodimer. Requires a divalent metal cation as cofactor.

It is found in the cytoplasm. It carries out the reaction coproporphyrinogen III + O2 + 2 H(+) = protoporphyrinogen IX + 2 CO2 + 2 H2O. Its pathway is porphyrin-containing compound metabolism; protoporphyrin-IX biosynthesis; protoporphyrinogen-IX from coproporphyrinogen-III (O2 route): step 1/1. Its function is as follows. Involved in the heme and chlorophyll biosynthesis. Catalyzes the aerobic oxidative decarboxylation of propionate groups of rings A and B of coproporphyrinogen-III to yield the vinyl groups in protoporphyrinogen-IX. The polypeptide is Oxygen-dependent coproporphyrinogen-III oxidase (Prochlorococcus marinus (strain SARG / CCMP1375 / SS120)).